The following is a 166-amino-acid chain: KH homology domain-containing protein 1C (166 aa).

The region spanning 19 to 78 is the KH; atypical domain; the sequence is PLVFDMEEDKEDYIFGPHDEYLHTLEVHSNTLIQLERWFTPTGQTRVTVVGPLKARLWVM.

The protein belongs to the KHDC1 family.

This Mus musculus (Mouse) protein is KH homology domain-containing protein 1C (Khdc1c).